Reading from the N-terminus, the 407-residue chain is Imidazolonepropionase (407 aa).

Fe(3+)-binding residues include histidine 73 and histidine 75. Zn(2+) contacts are provided by histidine 73 and histidine 75. Residues arginine 82, tyrosine 145, and histidine 178 each contribute to the 4-imidazolone-5-propanoate site. Residue tyrosine 145 participates in N-formimidoyl-L-glutamate binding. Histidine 243 contributes to the Fe(3+) binding site. Zn(2+) is bound at residue histidine 243. 4-imidazolone-5-propanoate is bound at residue glutamine 246. Fe(3+) is bound at residue aspartate 318. Aspartate 318 contributes to the Zn(2+) binding site. 2 residues coordinate N-formimidoyl-L-glutamate: asparagine 320 and glycine 322. Threonine 323 provides a ligand contact to 4-imidazolone-5-propanoate.

It belongs to the metallo-dependent hydrolases superfamily. HutI family. It depends on Zn(2+) as a cofactor. Fe(3+) serves as cofactor.

It is found in the cytoplasm. The catalysed reaction is 4-imidazolone-5-propanoate + H2O = N-formimidoyl-L-glutamate. The protein operates within amino-acid degradation; L-histidine degradation into L-glutamate; N-formimidoyl-L-glutamate from L-histidine: step 3/3. Its function is as follows. Catalyzes the hydrolytic cleavage of the carbon-nitrogen bond in imidazolone-5-propanoate to yield N-formimidoyl-L-glutamate. It is the third step in the universal histidine degradation pathway. The chain is Imidazolonepropionase from Serratia proteamaculans (strain 568).